The primary structure comprises 701 residues: DC-STAMP domain-containing protein 2 (701 aa).

Helical transmembrane passes span 15 to 35 (TCGF…ELLG), 40 to 60 (PFGC…GMGF), 82 to 102 (LLLL…NTLQ), and 215 to 235 (FPHL…LASL). N-linked (GlcNAc...) asparagine glycans are attached at residues asparagine 272 and asparagine 284. Helical transmembrane passes span 310 to 330 (ALSL…IQAL) and 404 to 424 (LLIM…LDLA). A glycan (N-linked (GlcNAc...) asparagine) is linked at asparagine 468. The chain crosses the membrane as a helical span at residues 488-508 (YIVIGTMYGLCFFVTLFGSYV). The tract at residues 673–701 (LQEALGTNLSDKSTSKPERAGNRNQDRKQ) is disordered. Residues 685–701 (STSKPERAGNRNQDRKQ) show a composition bias toward basic and acidic residues.

In terms of assembly, interacts with DCST1. Expressed in testis.

It is found in the cytoplasmic vesicle. Its subcellular location is the secretory vesicle. It localises to the acrosome membrane. Essential sperm cell-surface protein required for sperm-egg fusion and fertilization. The chain is DC-STAMP domain-containing protein 2 from Mus musculus (Mouse).